A 527-amino-acid polypeptide reads, in one-letter code: Glucose-6-phosphate isomerase (527 aa).

Glutamate 323 acts as the Proton donor in catalysis. Catalysis depends on residues histidine 352 and lysine 454.

It belongs to the GPI family.

It is found in the cytoplasm. The catalysed reaction is alpha-D-glucose 6-phosphate = beta-D-fructose 6-phosphate. Its pathway is carbohydrate biosynthesis; gluconeogenesis. The protein operates within carbohydrate degradation; glycolysis; D-glyceraldehyde 3-phosphate and glycerone phosphate from D-glucose: step 2/4. In terms of biological role, catalyzes the reversible isomerization of glucose-6-phosphate to fructose-6-phosphate. This chain is Glucose-6-phosphate isomerase, found in Prochlorococcus marinus (strain MIT 9301).